The sequence spans 190 residues: Potassium-transporting ATPase KdpC subunit (190 aa).

A helical membrane pass occupies residues 10-30 (TFIFLLLITGGVYPLLTTVLG).

It belongs to the KdpC family. In terms of assembly, the system is composed of three essential subunits: KdpA, KdpB and KdpC.

It is found in the cell inner membrane. Part of the high-affinity ATP-driven potassium transport (or Kdp) system, which catalyzes the hydrolysis of ATP coupled with the electrogenic transport of potassium into the cytoplasm. This subunit acts as a catalytic chaperone that increases the ATP-binding affinity of the ATP-hydrolyzing subunit KdpB by the formation of a transient KdpB/KdpC/ATP ternary complex. In Escherichia coli O139:H28 (strain E24377A / ETEC), this protein is Potassium-transporting ATPase KdpC subunit.